Consider the following 159-residue polypeptide: uncharacterized protein (159 aa).

The protein resides in the mitochondrion. This is an uncharacterized protein from Arabidopsis thaliana (Mouse-ear cress).